The following is a 258-amino-acid chain: Deoxyribose-phosphate aldolase 2 (258 aa).

Aspartate 102 (proton donor/acceptor) is an active-site residue. Lysine 165 functions as the Schiff-base intermediate with acetaldehyde in the catalytic mechanism. Lysine 199 acts as the Proton donor/acceptor in catalysis.

The protein belongs to the DeoC/FbaB aldolase family. DeoC type 2 subfamily.

It is found in the cytoplasm. The enzyme catalyses 2-deoxy-D-ribose 5-phosphate = D-glyceraldehyde 3-phosphate + acetaldehyde. The protein operates within carbohydrate degradation; 2-deoxy-D-ribose 1-phosphate degradation; D-glyceraldehyde 3-phosphate and acetaldehyde from 2-deoxy-alpha-D-ribose 1-phosphate: step 2/2. In terms of biological role, catalyzes a reversible aldol reaction between acetaldehyde and D-glyceraldehyde 3-phosphate to generate 2-deoxy-D-ribose 5-phosphate. The polypeptide is Deoxyribose-phosphate aldolase 2 (deoC2) (Vibrio vulnificus (strain YJ016)).